Here is a 1381-residue protein sequence, read N- to C-terminus: Hepatocyte growth factor receptor (1381 aa).

Residues 1–24 (MKAPAVLAPGILVLLFTLVQKSKG) form the signal peptide. The Extracellular portion of the chain corresponds to 25–932 (ECKEALVKST…VIVQPDQNFT (908 aa)). The Sema domain occupies 27 to 515 (KEALVKSTMN…TGKKITKIPL (489 aa)). Residue Asn-45 is glycosylated (N-linked (GlcNAc...) asparagine). Intrachain disulfides connect Cys-95-Cys-101, Cys-98-Cys-160, Cys-133-Cys-141, and Cys-173-Cys-176. Asn-106 carries an N-linked (GlcNAc...) asparagine glycan. 2 N-linked (GlcNAc...) asparagine glycosylation sites follow: Asn-203 and Asn-359. Cystine bridges form between Cys-299–Cys-364 and Cys-386–Cys-398. N-linked (GlcNAc...) asparagine glycans are attached at residues Asn-400 and Asn-406. 4 disulfide bridges follow: Cys-520/Cys-538, Cys-526/Cys-561, Cys-529/Cys-545, and Cys-541/Cys-551. IPT/TIG domains lie at 563–655 (PTVY…FSYV), 657–739 (PVIT…FTYR), and 742–836 (PIVY…LIYV). A glycan (O-linked (Man) threonine) is linked at Thr-582. N-linked (GlcNAc...) asparagine glycans are attached at residues Asn-607 and Asn-635. O-linked (Man) threonine glycosylation is found at Thr-676 and Thr-761. N-linked (GlcNAc...) asparagine glycosylation is found at Asn-785, Asn-879, and Asn-930. The helical transmembrane segment at 933 to 955 (GLIVGVVSISIILLLLLGLFLWL) threads the bilayer. The Cytoplasmic portion of the chain corresponds to 956–1381 (KKRKQIKDLG…QDNVDGEGDT (426 aa)). A Phosphoserine modification is found at Ser-966. Thr-977 carries the post-translational modification Phosphothreonine. Residues Ser-990 and Ser-997 each carry the phosphoserine modification. Tyr-1003 bears the Phosphotyrosine mark. Residues 1078–1345 (VHFNEVIGRG…RISAIFSTFI (268 aa)) form the Protein kinase domain. Residues 1084-1092 (IGRGHFGCV) and Lys-1110 contribute to the ATP site. Asp-1204 serves as the catalytic Proton acceptor. Positions 1212 to 1381 (LDEKFTVKVA…QDNVDGEGDT (170 aa)) are interaction with RANBP9. Tyr-1230 carries the post-translational modification Phosphotyrosine. Residues Tyr-1234 and Tyr-1235 each carry the phosphotyrosine; by autocatalysis modification. Position 1289 is a phosphothreonine (Thr-1289). The segment at 1320 to 1359 (WHPRAELRPSFSELVSRISAIFSTFIGEHYVHVNATYVNV) is interaction with MUC20. Residues Tyr-1349 and Tyr-1356 each carry the phosphotyrosine; by autocatalysis modification. Position 1365 is a phosphotyrosine (Tyr-1365).

The protein belongs to the protein kinase superfamily. Tyr protein kinase family. Heterodimer made of an alpha chain (50 kDa) and a beta chain (145 kDa) which are disulfide linked. Binds PLXNB1. Interacts when phosphorylated with downstream effectors including STAT3, PIK3R1, SRC, PCLG1, GRB2 and GAB1. Interacts with SPSB1, SPSB2 and SPSB4. Interacts with INPP5D/SHIP1. When phosphorylated at Tyr-1356, interacts with INPPL1/SHIP2. Interacts with RANBP9 and RANBP10, as well as SPSB1, SPSB2, SPSB3 and SPSB4. SPSB1 binding occurs in the presence and in the absence of HGF, however HGF treatment has a positive effect on this interaction. Interacts with MUC20; prevents interaction with GRB2 and suppresses hepatocyte growth factor-induced cell proliferation. Interacts with GRB10. Interacts with PTPN1 and PTPN2. Interacts with HSP90AA1 and HSP90AB1; the interaction suppresses MET kinase activity. Interacts with tensin TNS3. Interacts (when phosphorylated) with tensin TNS4 (via SH2 domain); the interaction increases MET protein stability by inhibiting MET endocytosis and subsequent lysosomal degradation. In terms of processing, autophosphorylated in response to ligand binding on Tyr-1234 and Tyr-1235 in the kinase domain leading to further phosphorylation of Tyr-1349 and Tyr-1356 in the C-terminal multifunctional docking site. Dephosphorylated by PTPRJ at Tyr-1349 and Tyr-1365. Dephosphorylated by PTPN1 and PTPN2. Post-translationally, ubiquitinated. Ubiquitination by CBL regulates the receptor stability and activity through proteasomal degradation. O-mannosylation of IPT/TIG domains by TMEM260 is required for protein maturation. O-mannosylated residues are composed of single mannose glycans that are not elongated or modified.

It localises to the membrane. The enzyme catalyses L-tyrosyl-[protein] + ATP = O-phospho-L-tyrosyl-[protein] + ADP + H(+). In its inactive state, the C-terminal tail interacts with the catalytic domain and inhibits the kinase activity. Upon ligand binding, the C-terminal tail is displaced and becomes phosphorylated, thus increasing the kinase activity. In terms of biological role, receptor tyrosine kinase that transduces signals from the extracellular matrix into the cytoplasm by binding to hepatocyte growth factor/HGF ligand. Regulates many physiological processes including proliferation, scattering, morphogenesis and survival. Ligand binding at the cell surface induces autophosphorylation of MET on its intracellular domain that provides docking sites for downstream signaling molecules. Following activation by ligand, interacts with the PI3-kinase subunit PIK3R1, PLCG1, SRC, GRB2, STAT3 or the adapter GAB1. Recruitment of these downstream effectors by MET leads to the activation of several signaling cascades including the RAS-ERK, PI3 kinase-AKT, or PLCgamma-PKC. The RAS-ERK activation is associated with the morphogenetic effects while PI3K/AKT coordinates prosurvival effects. During embryonic development, MET signaling plays a role in gastrulation, development and migration of muscles and neuronal precursors, angiogenesis and kidney formation. In adults, participates in wound healing as well as organ regeneration and tissue remodeling. Also promotes differentiation and proliferation of hematopoietic cells. This Sus scrofa (Pig) protein is Hepatocyte growth factor receptor (MET).